A 159-amino-acid chain; its full sequence is Probable inactive acireductone dioxygenase 2 (159 aa).

It belongs to the acireductone dioxygenase (ARD) family.

Its subcellular location is the cytoplasm. The protein localises to the nucleus. Its function is as follows. Probable inactive acireductone dioxygenase. The protein is Probable inactive acireductone dioxygenase 2 of Caenorhabditis briggsae.